Here is a 242-residue protein sequence, read N- to C-terminus: uncharacterized protein (242 aa).

8–15 lines the NADP(+) pocket; that stretch reads TGASGGIG. Ser137 lines the substrate pocket. Catalysis depends on Tyr150, which acts as the Proton acceptor.

Belongs to the short-chain dehydrogenases/reductases (SDR) family.

This is an uncharacterized protein from Bacillus subtilis (strain 168).